The primary structure comprises 408 residues: Peptidase T (408 aa).

His-78 is a Zn(2+) binding site. The active site involves Asp-80. Asp-141 lines the Zn(2+) pocket. The Proton acceptor role is filled by Glu-175. Zn(2+) contacts are provided by Glu-176, Asp-198, and His-380.

This sequence belongs to the peptidase M20B family. Zn(2+) serves as cofactor.

The protein resides in the cytoplasm. It catalyses the reaction Release of the N-terminal residue from a tripeptide.. Cleaves the N-terminal amino acid of tripeptides. This is Peptidase T from Clostridium botulinum (strain Loch Maree / Type A3).